Here is a 475-residue protein sequence, read N- to C-terminus: Dihydrolipoyl dehydrogenase (475 aa).

Residues 36–45 (ERYSTLGGVC), Lys54, and Gly117 contribute to the FAD site. Cys45 and Cys50 are oxidised to a cystine. NAD(+) contacts are provided by residues 182–186 (GGGII), Glu205, Val238, and 270–273 (AIGR). Residues Asp313 and Ala321 each coordinate FAD. Residue His445 is the Proton acceptor of the active site.

It belongs to the class-I pyridine nucleotide-disulfide oxidoreductase family. The cofactor is FAD.

Its subcellular location is the cytoplasm. It carries out the reaction N(6)-[(R)-dihydrolipoyl]-L-lysyl-[protein] + NAD(+) = N(6)-[(R)-lipoyl]-L-lysyl-[protein] + NADH + H(+). The branched-chain alpha-keto dehydrogenase complex catalyzes the overall conversion of alpha-keto acids to acyl-CoA and CO(2). It contains multiple copies of 3 enzymatic components: branched-chain alpha-keto acid decarboxylase (E1), lipoamide acyltransferase (E2) and lipoamide dehydrogenase (E3). The protein is Dihydrolipoyl dehydrogenase (lpd) of Vibrio parahaemolyticus serotype O3:K6 (strain RIMD 2210633).